A 179-amino-acid chain; its full sequence is Large ribosomal subunit protein uL10 (179 aa).

This sequence belongs to the universal ribosomal protein uL10 family. Part of the ribosomal stalk of the 50S ribosomal subunit. The N-terminus interacts with L11 and the large rRNA to form the base of the stalk. The C-terminus forms an elongated spine to which L12 dimers bind in a sequential fashion forming a multimeric L10(L12)X complex.

In terms of biological role, forms part of the ribosomal stalk, playing a central role in the interaction of the ribosome with GTP-bound translation factors. This chain is Large ribosomal subunit protein uL10, found in Thermotoga neapolitana (strain ATCC 49049 / DSM 4359 / NBRC 107923 / NS-E).